The following is a 94-amino-acid chain: Putative RNA-binding protein RbpD (94 aa).

Residues 2 to 79 (TIYVGNLSYR…RQLRVNKAKP (78 aa)) enclose the RRM domain. Positions 73-94 (RVNKAKPREDDRRGSWGKKQDY) are disordered. Residues 78-94 (KPREDDRRGSWGKKQDY) are compositionally biased toward basic and acidic residues.

The protein is Putative RNA-binding protein RbpD (rbpD) of Nostoc sp. (strain PCC 7120 / SAG 25.82 / UTEX 2576).